The sequence spans 1226 residues: Methionine synthase (1226 aa).

The Hcy-binding domain maps to 6–326; sequence RQQLEQQLKQ…EHIAAIAKAV (321 aa). Zn(2+) contacts are provided by cysteine 248, cysteine 311, and cysteine 312. In terms of domain architecture, Pterin-binding spans 357–618; the sequence is FVNVGERTNV…VPLKLREAVE (262 aa). Residues 651–745 form the B12-binding N-terminal domain; it reads SALEWRAWPV…FINAQKSGST (95 aa). Methylcob(III)alamin is bound by residues glutamate 695, 757–761, histidine 760, serine 805, threonine 809, and alanine 861; that span reads GDVHD. The B12-binding domain maps to 747 to 882; it reads NGKILLATVK…SDEQRPGFIE (136 aa). The 329-residue stretch at 898 to 1226 folds into the AdoMet activation domain; it reads KTPKSRPVTL…EKWLAPNLDA (329 aa). S-adenosyl-L-methionine contacts are provided by residues aspartate 948, arginine 1136, and 1191-1192; that span reads YF.

It belongs to the vitamin-B12 dependent methionine synthase family. The cofactor is methylcob(III)alamin. Zn(2+) serves as cofactor.

It carries out the reaction (6S)-5-methyl-5,6,7,8-tetrahydrofolate + L-homocysteine = (6S)-5,6,7,8-tetrahydrofolate + L-methionine. Its pathway is amino-acid biosynthesis; L-methionine biosynthesis via de novo pathway; L-methionine from L-homocysteine (MetH route): step 1/1. Functionally, catalyzes the transfer of a methyl group from methyl-cobalamin to homocysteine, yielding enzyme-bound cob(I)alamin and methionine. Subsequently, remethylates the cofactor using methyltetrahydrofolate. The polypeptide is Methionine synthase (metH) (Vibrio cholerae serotype O1 (strain ATCC 39315 / El Tor Inaba N16961)).